Reading from the N-terminus, the 336-residue chain is Ankyrin repeat and SOCS box protein 1 (336 aa).

6 ANK repeats span residues 37 to 69 (CDDTRLHDAAYVGDLQTLRNLLQEESYRSRINE), 78 to 107 (LPCTPLRIAATAGHGNCVDFLIRKGAEVDL), 111 to 140 (KGQTALYVAVVNGHLESTEILLEAGADPNG), 144 to 173 (HRSTPVYHASRVGRDDILKALIRYGADVDV), 192 to 221 (LVVCPLYISAAYHNLQCFRLLLQAGANPDF), and 236 to 266 (SPGCVMDAVLRHGCEAAFVSLLVEFGANLNL). Residues 287-336 (LQVFKEARSIPRTLLSLCRVAVRRALGKYRLHLVPSLPLPDPIKKFLLYE) form the SOCS box domain.

It belongs to the ankyrin SOCS box (ASB) family. In terms of assembly, interacts with CUL5 and RNF7. As to expression, highest expression in testis, spleen, bone marrow and salivary gland.

Its pathway is protein modification; protein ubiquitination. In terms of biological role, probable substrate-recognition component of a SCF-like ECS (Elongin-Cullin-SOCS-box protein) E3 ligase complex which mediates the ubiquitination and subsequent proteasomal degradation of target proteins. Mediates Notch-induced ubiquitination and degradation of TCF3/E2A and JAK2. May play a role in testis development. This chain is Ankyrin repeat and SOCS box protein 1 (Asb1), found in Mus musculus (Mouse).